Reading from the N-terminus, the 366-residue chain is Terpene cyclase atmA (366 aa).

Transmembrane regions (helical) follow at residues 9 to 29 (FLLLAMTSFYMMYISLFNNGF), 84 to 104 (LTGLSFSGGMVGIWMIVVVHI), 113 to 133 (GMVITLIVGIAQQAVGPGIVI), 162 to 182 (GLVVSMIMSYIFPLVIMSLPA), 195 to 215 (IAAWQGWPVYFVIIMTTHHLF), 233 to 253 (VYHFGFACSCLCHMAWLSAFV), 291 to 311 (AGLFTFLQWDYCVAAAATMVW), and 333 to 353 (ILRLLGWILIDGPSATAVRLI).

Belongs to the membrane-bound ascI terpene cyclase family.

It localises to the membrane. In terms of biological role, aflatrem synthesis protein A; part of the ATM2 gene cluster that mediates the biosynthesis of aflatrem, a tremorgenic mycotoxin with acute neurotoxic effects. Synthesis of geranylgeranyl diphosphate (GGPP) by AtmG (a GGPP synthase) precedes condensation of GGPP with indole 3-glycerol phosphate, followed by epoxidation and cyclization by AtmM (a FAD-dependent monooxygenase) and AtmC (a prenyltransferase) to produce paspaline. AtmB is also essential for paspaline production, but its exact role has not been identified yet. AtmP, a cytochrome P450 monooxygenase, subsequently converts paspaline to 13-desoxypaxilline via PC-M6 by removal of the C-30 methyl group and oxidation at C-10. AtmQ, a cytochrome P450 monooxygenase, then catalyzes the oxidation of 13-desoxypaxilline, first at C-7 to produce paspalicine and then at C-13 to form paspalinine. Finally, AtmD prenylates paspalinine to form aflatrem. The role of atmA in the aflatrem biosynthesis is still unknown. In Aspergillus flavus, this protein is Terpene cyclase atmA.